The primary structure comprises 312 residues: Very-long-chain 3-oxoacyl-CoA reductase (312 aa).

The chain crosses the membrane as a helical span at residues 4–24 (ALPAAGFLYWVGASTIAYLTL). 50–79 (GEWAVVTGGTDGIGKSYAEELAKRGMKIVL) is an NADP(+) binding site. Helical transmembrane passes span 182–202 (GVIL…LTVY) and 271–291 (GYVI…WIYF). Substrate is bound at residue Ser189. Tyr202 functions as the Proton acceptor in the catalytic mechanism. Positions 308 to 312 (KTKKN) match the Di-lysine motif motif.

This sequence belongs to the short-chain dehydrogenases/reductases (SDR) family. 17-beta-HSD 3 subfamily.

It is found in the endoplasmic reticulum membrane. It carries out the reaction a very-long-chain (3R)-3-hydroxyacyl-CoA + NADP(+) = a very-long-chain 3-oxoacyl-CoA + NADPH + H(+). The catalysed reaction is 17beta-estradiol + NAD(+) = estrone + NADH + H(+). It catalyses the reaction 17beta-estradiol + NADP(+) = estrone + NADPH + H(+). The enzyme catalyses 3-oxooctadecanoyl-CoA + NADPH + H(+) = (3R)-hydroxyoctadecanoyl-CoA + NADP(+). It carries out the reaction (7Z,10Z,13Z,16Z)-3-oxodocosatetraenoyl-CoA + NADPH + H(+) = (3R)-hydroxy-(7Z,10Z,13Z,16Z)-docosatetraenoyl-CoA + NADP(+). The catalysed reaction is 3-oxo-(7Z,10Z,13Z,16Z,19Z)-docosapentaenoyl-CoA + NADPH + H(+) = (3R)-hydroxy-(7Z,10Z,13Z,16Z,19Z)-docosapentaenoyl-CoA + NADP(+). It catalyses the reaction (8Z,11Z,14Z)-3-oxoeicosatrienoyl-CoA + NADPH + H(+) = (3R)-hydroxy-(8Z,11Z,14Z)-eicosatrienoyl-CoA + NADP(+). It participates in lipid metabolism; fatty acid biosynthesis. The protein operates within steroid biosynthesis; estrogen biosynthesis. Catalyzes the second of the four reactions of the long-chain fatty acids elongation cycle. This endoplasmic reticulum-bound enzymatic process, allows the addition of two carbons to the chain of long- and very long-chain fatty acids/VLCFAs per cycle. This enzyme has a 3-ketoacyl-CoA reductase activity, reducing 3-ketoacyl-CoA to 3-hydroxyacyl-CoA, within each cycle of fatty acid elongation. Thereby, it may participate in the production of VLCFAs of different chain lengths that are involved in multiple biological processes as precursors of membrane lipids and lipid mediators. May also catalyze the transformation of estrone (E1) into estradiol (E2) and play a role in estrogen formation. The protein is Very-long-chain 3-oxoacyl-CoA reductase of Rattus norvegicus (Rat).